Reading from the N-terminus, the 315-residue chain is tRNA dimethylallyltransferase (315 aa).

10–17 (GPTAVGKT) is a binding site for ATP. 12–17 (TAVGKT) contacts substrate. An interaction with substrate tRNA region spans residues 35–38 (DSMQ).

Belongs to the IPP transferase family. Monomer. Mg(2+) serves as cofactor.

It carries out the reaction adenosine(37) in tRNA + dimethylallyl diphosphate = N(6)-dimethylallyladenosine(37) in tRNA + diphosphate. Catalyzes the transfer of a dimethylallyl group onto the adenine at position 37 in tRNAs that read codons beginning with uridine, leading to the formation of N6-(dimethylallyl)adenosine (i(6)A). The polypeptide is tRNA dimethylallyltransferase (Geobacillus kaustophilus (strain HTA426)).